The chain runs to 316 residues: Cytochrome c biogenesis protein CcsA (316 aa).

The next 8 membrane-spanning stretches (helical) occupy residues histidine 12–tyrosine 32, glycine 44–glycine 64, leucine 71–phenylalanine 91, leucine 98–leucine 118, leucine 145–phenylalanine 165, valine 222–asparagine 242, threonine 256–histidine 270, and alanine 283–leucine 303.

Belongs to the CcmF/CycK/Ccl1/NrfE/CcsA family. As to quaternary structure, may interact with Ccs1.

The protein localises to the plastid. The protein resides in the chloroplast thylakoid membrane. In terms of biological role, required during biogenesis of c-type cytochromes (cytochrome c6 and cytochrome f) at the step of heme attachment. In Ranunculus macranthus (Large buttercup), this protein is Cytochrome c biogenesis protein CcsA.